Here is a 424-residue protein sequence, read N- to C-terminus: 3-ketoacyl-CoA thiolase B, peroxisomal (424 aa).

The transit peptide at 1-26 (MHRLQVVLGHLAGRSESSSALQAAPC) directs the protein to the peroxisome. Residues 1-26 (MHRLQVVLGHLAGRSESSSALQAAPC) form a PTS2-type peroxisomal targeting signal region. Cysteine 123 functions as the Acyl-thioester intermediate in the catalytic mechanism. N6-acetyllysine is present on residues lysine 173 and lysine 234. CoA-binding residues include arginine 249, threonine 252, and serine 276. Cysteine 408 serves as the catalytic Proton donor/acceptor.

The protein belongs to the thiolase-like superfamily. Thiolase family. Homodimer. Interacts (via PTS2-type peroxisomal targeting signal region) with PEX7; leading to its translocation into peroxisomes.

The protein resides in the peroxisome. The catalysed reaction is an acyl-CoA + acetyl-CoA = a 3-oxoacyl-CoA + CoA. It carries out the reaction 2 acetyl-CoA = acetoacetyl-CoA + CoA. It catalyses the reaction hexanoyl-CoA + acetyl-CoA = 3-oxooctanoyl-CoA + CoA. The enzyme catalyses tetradecanoyl-CoA + acetyl-CoA = 3-oxohexadecanoyl-CoA + CoA. The catalysed reaction is 3-oxohexadecanedioyl-CoA + CoA = tetradecanedioyl-CoA + acetyl-CoA. It carries out the reaction 3-oxo-(6Z,9Z,12Z,15Z,18Z,21Z)-tetracosahexaenoyl-CoA + CoA = (4Z,7Z,10Z,13Z,16Z,19Z)-docosahexaenoyl-CoA + acetyl-CoA. It participates in lipid metabolism; peroxisomal fatty acid beta-oxidation. Its function is as follows. Responsible for the thiolytic cleavage of straight chain 3-keto fatty acyl-CoAs (3-oxoacyl-CoAs). Plays an important role in fatty acid peroxisomal beta-oxidation. Catalyzes the cleavage of short, medium, long, and very long straight chain 3-oxoacyl-CoAs. Medium chain straight 3-oxoacyl-CoAs are preferred substrates. The protein is 3-ketoacyl-CoA thiolase B, peroxisomal of Rattus norvegicus (Rat).